The chain runs to 122 residues: UPF0102 protein R00337 (122 aa).

This sequence belongs to the UPF0102 family.

The protein is UPF0102 protein R00337 of Rhizobium meliloti (strain 1021) (Ensifer meliloti).